We begin with the raw amino-acid sequence, 92 residues long: Large ribosomal subunit protein uL24c (92 aa).

The protein belongs to the universal ribosomal protein uL24 family. As to quaternary structure, part of the 50S ribosomal subunit.

The protein resides in the plastid. It localises to the chloroplast. Its function is as follows. One of two assembly initiator proteins, it binds directly to the 5'-end of the 23S rRNA, where it nucleates assembly of the 50S subunit. The polypeptide is Large ribosomal subunit protein uL24c (rpl24) (Gracilaria tenuistipitata var. liui (Red alga)).